A 487-amino-acid polypeptide reads, in one-letter code: Histamine H1 receptor (487 aa).

Residues Met-1 to Pro-29 are Extracellular-facing. Residues Asn-5 and Asn-18 are each glycosylated (N-linked (GlcNAc...) asparagine). Residues Leu-30–Tyr-50 traverse the membrane as a helical segment. Residues Ala-51–Leu-64 lie on the Cytoplasmic side of the membrane. The helical transmembrane segment at Tyr-65–Leu-89 threads the bilayer. The Extracellular segment spans residues Met-90–Arg-97. The helical transmembrane segment at Pro-98–Ile-123 threads the bilayer. Cys-100 and Cys-180 form a disulfide bridge. Residues Asp-107 and Thr-112 each contribute to the histamine site. An important for agonist binding region spans residues Asp-107–Thr-112. The Cytoplasmic segment spans residues Asp-124–Ala-144. Phosphothreonine is present on residues Thr-140 and Thr-142. The chain crosses the membrane as a helical span at residues Ser-145–Gly-164. Residues Trp-165–Thr-188 lie on the Extracellular side of the membrane. The helical transmembrane segment at Trp-189 to Ala-211 threads the bilayer. Asn-198 serves as a coordination point for histamine. Topologically, residues Lys-212–Gln-416 are cytoplasmic. Residue Ser-230 is modified to Phosphoserine. Residues Lys-238–Lys-261 are compositionally biased toward basic and acidic residues. Positions Lys-238–Glu-292 are disordered. A Phosphothreonine modification is found at Thr-279. Ser-344 and Ser-347 each carry phosphoserine. Residues Glu-345–Gly-379 are disordered. Over residues Gly-353–Thr-369 the composition is skewed to polar residues. Residues Ser-380, Ser-396, and Ser-398 each carry the phosphoserine modification. Residues Leu-417 to Phe-440 form a helical membrane-spanning segment. Residues Phe-424 to Trp-428 form an important for agonist binding region. Residue Tyr-431 participates in histamine binding. Residues Cys-441 and Cys-444 are joined by a disulfide bond. At Cys-441–Asn-446 the chain is on the extracellular side. Residues Glu-447–Pro-469 traverse the membrane as a helical segment. Over Leu-470–Ser-487 the chain is Cytoplasmic.

It belongs to the G-protein coupled receptor 1 family. In terms of processing, phosphorylation at sites in the second and third cytoplasmic loops independently contribute to agonist-induced receptor down-regulation.

The protein localises to the cell membrane. In terms of biological role, G-protein-coupled receptor for histamine, a biogenic amine that functions as an immune modulator and a neurotransmitter. Through the H1 receptor, histamine mediates the contraction of smooth muscles and increases capillary permeability due to contraction of terminal venules. Also mediates neurotransmission in the central nervous system and thereby regulates circadian rhythms, emotional and locomotor activities as well as cognitive functions. The chain is Histamine H1 receptor from Pan troglodytes (Chimpanzee).